The sequence spans 183 residues: Adenine phosphoribosyltransferase (183 aa).

It belongs to the purine/pyrimidine phosphoribosyltransferase family. In terms of assembly, homodimer.

Its subcellular location is the cytoplasm. The enzyme catalyses AMP + diphosphate = 5-phospho-alpha-D-ribose 1-diphosphate + adenine. The protein operates within purine metabolism; AMP biosynthesis via salvage pathway; AMP from adenine: step 1/1. Its function is as follows. Catalyzes a salvage reaction resulting in the formation of AMP, that is energically less costly than de novo synthesis. The chain is Adenine phosphoribosyltransferase from Salmonella paratyphi C (strain RKS4594).